We begin with the raw amino-acid sequence, 89 residues long: Small ribosomal subunit protein uS15 (89 aa).

The protein belongs to the universal ribosomal protein uS15 family. Part of the 30S ribosomal subunit. Forms a bridge to the 50S subunit in the 70S ribosome, contacting the 23S rRNA.

Functionally, one of the primary rRNA binding proteins, it binds directly to 16S rRNA where it helps nucleate assembly of the platform of the 30S subunit by binding and bridging several RNA helices of the 16S rRNA. Forms an intersubunit bridge (bridge B4) with the 23S rRNA of the 50S subunit in the ribosome. In Staphylococcus carnosus (strain TM300), this protein is Small ribosomal subunit protein uS15.